Consider the following 196-residue polypeptide: MTIPFILASASPARRKLLQTMGIDPIVRHSNFDESQIQLTDTIALVQTLAQCKAEVVANEVNEGLILGCDSLLEVDTQSYGKPESPEEAIIRWQKMRGNSGVLYTGHALIDKTQNKQLLRCGITQVYFADVSDAEIKAYVASGEPLKCAGCFALEGKGGLFVEKLEGCHSNVIGLSLPLLREMLNELGYTVMDFWQ.

The active-site Proton acceptor is the Asp-70.

The protein belongs to the Maf family. A divalent metal cation is required as a cofactor.

It is found in the cytoplasm. It carries out the reaction a ribonucleoside 5'-triphosphate + H2O = a ribonucleoside 5'-phosphate + diphosphate + H(+). The catalysed reaction is a 2'-deoxyribonucleoside 5'-triphosphate + H2O = a 2'-deoxyribonucleoside 5'-phosphate + diphosphate + H(+). Nucleoside triphosphate pyrophosphatase. May have a dual role in cell division arrest and in preventing the incorporation of modified nucleotides into cellular nucleic acids. In Gloeothece citriformis (strain PCC 7424) (Cyanothece sp. (strain PCC 7424)), this protein is Nucleoside triphosphate pyrophosphatase.